We begin with the raw amino-acid sequence, 186 residues long: ATP-dependent protease subunit HslV (186 aa).

Thr-13 is an active-site residue. The Na(+) site is built by Ala-167, Cys-170, and Thr-173.

The protein belongs to the peptidase T1B family. HslV subfamily. A double ring-shaped homohexamer of HslV is capped on each side by a ring-shaped HslU homohexamer. The assembly of the HslU/HslV complex is dependent on binding of ATP.

Its subcellular location is the cytoplasm. It carries out the reaction ATP-dependent cleavage of peptide bonds with broad specificity.. Allosterically activated by HslU binding. Its function is as follows. Protease subunit of a proteasome-like degradation complex believed to be a general protein degrading machinery. The sequence is that of ATP-dependent protease subunit HslV from Allorhizobium ampelinum (strain ATCC BAA-846 / DSM 112012 / S4) (Agrobacterium vitis (strain S4)).